Consider the following 365-residue polypeptide: Probable 7-methylxanthine methyltransferase 4 (365 aa).

Tyrosine 18 is a binding site for S-adenosyl-L-homocysteine. Threonine 25 provides a ligand contact to theobromine. 6 residues coordinate S-adenosyl-L-homocysteine: cysteine 62, glutamine 67, aspartate 99, leucine 100, serine 132, and phenylalanine 133. Theobromine is bound by residues tyrosine 150, histidine 153, and tryptophan 154. Mg(2+)-binding residues include asparagine 170, aspartate 256, phenylalanine 258, and asparagine 259. Position 311 (phenylalanine 311) interacts with theobromine.

Belongs to the methyltransferase superfamily. Type-7 methyltransferase family. The cofactor is Mg(2+).

The enzyme catalyses 7-methylxanthine + S-adenosyl-L-methionine = theobromine + S-adenosyl-L-homocysteine + H(+). The protein operates within alkaloid biosynthesis. Its function is as follows. Involved in the biosynthesis of theobromine. This is Probable 7-methylxanthine methyltransferase 4 from Theobroma cacao (Cacao).